We begin with the raw amino-acid sequence, 179 residues long: Large ribosomal subunit protein uL5 (179 aa).

The protein belongs to the universal ribosomal protein uL5 family. Part of the 50S ribosomal subunit; part of the 5S rRNA/L5/L18/L25 subcomplex. Contacts the 5S rRNA and the P site tRNA. Forms a bridge to the 30S subunit in the 70S ribosome.

This is one of the proteins that bind and probably mediate the attachment of the 5S RNA into the large ribosomal subunit, where it forms part of the central protuberance. In the 70S ribosome it contacts protein S13 of the 30S subunit (bridge B1b), connecting the 2 subunits; this bridge is implicated in subunit movement. Contacts the P site tRNA; the 5S rRNA and some of its associated proteins might help stabilize positioning of ribosome-bound tRNAs. The polypeptide is Large ribosomal subunit protein uL5 (Pseudomonas putida (strain ATCC 700007 / DSM 6899 / JCM 31910 / BCRC 17059 / LMG 24140 / F1)).